The sequence spans 317 residues: tRNA dimethylallyltransferase (317 aa).

14-21 (GPTAVGKT) contributes to the ATP binding site. A substrate-binding site is contributed by 16-21 (TAVGKT). Residues 39–42 (DSMQ) are interaction with substrate tRNA.

It belongs to the IPP transferase family. In terms of assembly, monomer. It depends on Mg(2+) as a cofactor.

It carries out the reaction adenosine(37) in tRNA + dimethylallyl diphosphate = N(6)-dimethylallyladenosine(37) in tRNA + diphosphate. Its function is as follows. Catalyzes the transfer of a dimethylallyl group onto the adenine at position 37 in tRNAs that read codons beginning with uridine, leading to the formation of N6-(dimethylallyl)adenosine (i(6)A). This is tRNA dimethylallyltransferase from Bacillus cereus (strain AH820).